A 236-amino-acid polypeptide reads, in one-letter code: Exosome complex component Rrp4 (236 aa).

The 70-residue stretch at 64 to 133 (GDKVIGKIIE…EIKESWLTLK (70 aa)) folds into the S1 motif domain. Residues 141–199 (EGGHMVLIHASRVPRVIGKGGGMVNMVKELTSTRIIIGQNGLIWIDGPIEGVTMAIAAI) enclose the KH domain.

It belongs to the RRP4 family. As to quaternary structure, component of the archaeal exosome complex. Forms a trimer of Rrp4 and/or Csl4 subunits. The trimer associates with a hexameric ring-like arrangement composed of 3 Rrp41-Rrp42 heterodimers.

Its subcellular location is the cytoplasm. Non-catalytic component of the exosome, which is a complex involved in RNA degradation. Increases the RNA binding and the efficiency of RNA degradation. Confers strong poly(A) specificity to the exosome. The polypeptide is Exosome complex component Rrp4 (Thermoplasma volcanium (strain ATCC 51530 / DSM 4299 / JCM 9571 / NBRC 15438 / GSS1)).